Here is a 141-residue protein sequence, read N- to C-terminus: IRLLHSLTPPPPPPPPPPPPPPPPPPPPPPPPPPPPPPPPPPPPPPPPPPPPPPPPPPRRARIHHNIPLFLRFFKKSYSSHFHWRCGQRNHCHSFVCKRLLVAYPVRHFLSAACQFLPWLSINSFSGTEMLNNRFHGLITL.

Positions 1-61 (IRLLHSLTPP…PPPPPPPRRA (61 aa)) are disordered. Pro residues predominate over residues 8 to 58 (TPPPPPPPPPPPPPPPPPPPPPPPPPPPPPPPPPPPPPPPPPPPPPPPPPP). The H-T-H motif DNA-binding region spans 98-116 (KRLLVAYPVRHFLSAACQF).

This is an uncharacterized protein from Owenia fusiformis (Polychaete worm).